Consider the following 477-residue polypeptide: Argininosuccinate lyase (477 aa).

This sequence belongs to the lyase 1 family. Argininosuccinate lyase subfamily.

The protein resides in the cytoplasm. It carries out the reaction 2-(N(omega)-L-arginino)succinate = fumarate + L-arginine. It functions in the pathway amino-acid biosynthesis; L-arginine biosynthesis; L-arginine from L-ornithine and carbamoyl phosphate: step 3/3. In Corynebacterium glutamicum (strain R), this protein is Argininosuccinate lyase.